Consider the following 846-residue polypeptide: uncharacterized protein (846 aa).

Disordered regions lie at residues 159–217 (VPTF…INHI), 254–276 (CNLN…SNSN), 332–414 (NKLN…PLSI), 459–501 (GSSI…SNSL), 556–651 (QQQQ…NFND), and 803–846 (TTTT…NKNK). Positions 163–217 (HNQNQNNNNQNNNQNNNNNNNNNNNNNNNNNNNNNNNSQNNNNNQNNNNNHINHI) are enriched in low complexity. Low complexity predominate over residues 355–414 (LQSPNSQSLANSSANISSNALNQSSSSQQQQPQSTSQQQQQQHKMNSSSGNISPPLPLSI). The span at 459-482 (GSSITPKNLSPLSSSAPNTPKQFA) shows a compositional bias: polar residues. Low complexity-rich tracts occupy residues 483–501 (SLSS…SNSL), 568–642 (QQQQ…QPNN), and 811–846 (NNNN…NKNK).

This is an uncharacterized protein from Dictyostelium discoideum (Social amoeba).